The following is a 364-amino-acid chain: Dihydroorotate dehydrogenase (quinone) (364 aa).

Residues 61–65 (AGFDK) and Thr85 each bind FMN. Lys65 contacts substrate. Position 110–114 (110–114 (NRMGF)) interacts with substrate. The FMN site is built by Asn139 and Asn170. Asn170 is a substrate binding site. The active-site Nucleophile is the Ser173. A substrate-binding site is contributed by Asn175. Lys214 and Ala242 together coordinate FMN. A substrate-binding site is contributed by 243 to 244 (NT). FMN-binding positions include Gly266, Gly295, and 316–317 (YS).

It belongs to the dihydroorotate dehydrogenase family. Type 2 subfamily. In terms of assembly, monomer. It depends on FMN as a cofactor.

Its subcellular location is the cell membrane. It carries out the reaction (S)-dihydroorotate + a quinone = orotate + a quinol. It functions in the pathway pyrimidine metabolism; UMP biosynthesis via de novo pathway; orotate from (S)-dihydroorotate (quinone route): step 1/1. Functionally, catalyzes the conversion of dihydroorotate to orotate with quinone as electron acceptor. The sequence is that of Dihydroorotate dehydrogenase (quinone) from Rhodopseudomonas palustris (strain ATCC BAA-98 / CGA009).